The following is a 414-amino-acid chain: Transcription factor FAMA (414 aa).

Disordered stretches follow at residues 1–61 (MDKD…TPFD) and 142–197 (KEDQ…SQRM). 2 stretches are compositionally biased toward low complexity: residues 12 to 24 (GESSGGNDDNSSG) and 35 to 49 (QQQQKQSMPQQQQHQ). Positions 166 to 175 (RENKNVTKKE) are enriched in basic and acidic residues. Over residues 176–185 (VKSKRKRART) the composition is skewed to basic residues. Residues 187-197 (KTSEEVESQRM) are compositionally biased toward basic and acidic residues. One can recognise a bHLH domain in the interval 194-245 (SQRMTHIAVERNRRKQMNEHLRVLRSLMPGSYVQRGDQASIIGGAIEFVREL). Positions 249 to 253 (LQCLE) match the LxCxE motif motif.

Interacts with FAMA through its LxCxE motif. Self-interacts. Also interacts with bHLH071 and bHLH093. Interacts with RBR1. As to expression, resctricted to stomatal cell lineages (at protein level). Expressed in roots, leaves, stems, and flowers.

The protein localises to the nucleus. Functionally, transcription activator. Together with MYB88 and MYB124, ensures that stomata contain just two guard cells (GCs) by enforcing a single symmetric precursor cell division before stomatal maturity. Together with SPCH and MUTE, regulates the stomata formation. Required to promote differentiation and morphogenesis of stomatal guard cells and to halt proliferative divisions in their immediate precursors. Mediates the formation of stomata. Prevents histone H3K27me3 marks and derepresses stem cell gene expression. The polypeptide is Transcription factor FAMA (FAMA) (Arabidopsis thaliana (Mouse-ear cress)).